The following is a 466-amino-acid chain: tRNA modification GTPase MnmE (466 aa).

(6S)-5-formyl-5,6,7,8-tetrahydrofolate is bound by residues R25, E82, and K127. Residues G223 to G388 form the TrmE-type G domain. K(+) is bound at residue N233. Residues N233–S238, T252–T258, D277–G280, N346–D349, and S369–R371 each bind GTP. S237 contributes to the Mg(2+) binding site. K(+) is bound by residues T252, I254, and T257. Residue T258 coordinates Mg(2+). K466 serves as a coordination point for (6S)-5-formyl-5,6,7,8-tetrahydrofolate.

Belongs to the TRAFAC class TrmE-Era-EngA-EngB-Septin-like GTPase superfamily. TrmE GTPase family. Homodimer. Heterotetramer of two MnmE and two MnmG subunits. K(+) serves as cofactor.

The protein resides in the cytoplasm. Exhibits a very high intrinsic GTPase hydrolysis rate. Involved in the addition of a carboxymethylaminomethyl (cmnm) group at the wobble position (U34) of certain tRNAs, forming tRNA-cmnm(5)s(2)U34. This chain is tRNA modification GTPase MnmE, found in Acidovorax sp. (strain JS42).